The chain runs to 512 residues: MIKDMIDSIEQFAQTQADFPVYDCLGERRTYGQLKRDSDSIAAFIDSLALLAKSPVLVFGAQTYDMLATFVALTKSGHAYIPVDVHSAPERILAIIEIAKPSLIIAIEEFPLTIEGISLVSLSEIESAKLAEMPYERTHSVKGDDNYYIIFTSGTTGQPKGVQISHDNLLSFTNWMIEDAAFDVPKQPQMLAQPPYSFDLSVMYWAPTLALGGTLFALPKELVADFKQLFTTIAQLPVGIWTSTPSFADMAMLSDDFCQARMPALTHFYFDGEELTVSTARKLFERFPSAKIINAYGPTEATVALSAIEITREMVDNYTRLPIGYPKPDSPTYIIDEDGKELASGEQGEIIVTGPAVSKGYLNNPEKTAEAFFTFKGQPAYHTGDIGSLTEDNILLYGGRLDFQIKYAGYRIELEDVSQQLNQSPMVASAVAVPRYNKEHKVQNLLAYIVVKDGVKERFDRELELTKAIKASVKDHMMSYMMPSKFLYRDSLPLTPNGKIDIKTLINEVNNR.

Position 152–153 (152–153) interacts with ATP; sequence TS. Asp-199 provides a ligand contact to D-alanine. 294-299 provides a ligand contact to ATP; the sequence is NAYGPT. Residue Val-303 participates in D-alanine binding. ATP-binding positions include Asp-385, 397 to 400, and Lys-499; that span reads YGGR. D-alanine is bound at residue Lys-499.

Belongs to the ATP-dependent AMP-binding enzyme family. DltA subfamily.

The protein localises to the cytoplasm. The catalysed reaction is holo-[D-alanyl-carrier protein] + D-alanine + ATP = D-alanyl-[D-alanyl-carrier protein] + AMP + diphosphate. It functions in the pathway cell wall biogenesis; lipoteichoic acid biosynthesis. Catalyzes the first step in the D-alanylation of lipoteichoic acid (LTA), the activation of D-alanine and its transfer onto the D-alanyl carrier protein (Dcp) DltC. In an ATP-dependent two-step reaction, forms a high energy D-alanyl-AMP intermediate, followed by transfer of the D-alanyl residue as a thiol ester to the phosphopantheinyl prosthetic group of the Dcp. D-alanylation of LTA plays an important role in modulating the properties of the cell wall in Gram-positive bacteria, influencing the net charge of the cell wall. This is D-alanine--D-alanyl carrier protein ligase from Streptococcus pyogenes serotype M4 (strain MGAS10750).